The following is a 472-amino-acid chain: GTPase HflX (472 aa).

The tract at residues 1 to 21 (MDTIDTPGEQGSQSFGNSLGA) is disordered. The region spanning 230–396 (PTFALIGYTN…LMTEIIQEKS (167 aa)) is the Hflx-type G domain. GTP is bound by residues 236 to 243 (GYTNSGKS), 261 to 265 (FATLD), 283 to 286 (DTVG), 349 to 352 (NKVD), and 374 to 376 (SAK). Residues Ser243 and Thr263 each coordinate Mg(2+).

This sequence belongs to the TRAFAC class OBG-HflX-like GTPase superfamily. HflX GTPase family. Monomer. Associates with the 50S ribosomal subunit. It depends on Mg(2+) as a cofactor.

It is found in the cytoplasm. Its function is as follows. GTPase that associates with the 50S ribosomal subunit and may have a role during protein synthesis or ribosome biogenesis. Specific for GTP. The chain is GTPase HflX from Chlamydia pneumoniae (Chlamydophila pneumoniae).